The chain runs to 555 residues: Heterochromatin protein 1-binding protein 3 (555 aa).

Ala-2 is modified (N-acetylalanine). The residue at position 6 (Ser-6) is a Phosphoserine. Residues 29–134 (KLGEKVEDNT…KEKKVKKTIP (106 aa)) form a disordered region. The residue at position 51 (Thr-51) is a Phosphothreonine. Over residues 51 to 67 (TPPKSKLAEGVEEKPEP) the composition is skewed to basic and acidic residues. Lys-64 is covalently cross-linked (Glycyl lysine isopeptide (Lys-Gly) (interchain with G-Cter in SUMO2)). Thr-85 carries the phosphothreonine modification. Residue Lys-97 forms a Glycyl lysine isopeptide (Lys-Gly) (interchain with G-Cter in SUMO2) linkage. Basic and acidic residues predominate over residues 100–127 (PENEEKEENKPSEETKKDEKDQSKEKEK). Ser-142, Ser-155, and Ser-156 each carry phosphoserine. The 76-residue stretch at 157–232 (PRPKMDAILT…GASGSFVVVQ (76 aa)) folds into the H15 1 domain. N6-acetyllysine is present on Lys-190. Residues 227-254 (SFVVVQKSRKPPQKSRNRKNRSSAVDPE) are disordered. The span at 233–247 (KSRKPPQKSRNRKNR) shows a compositional bias: basic residues. Phosphoserine is present on residues Ser-248 and Ser-249. H15 domains lie at 255-330 (PQVK…QLKK) and 337-413 (LGGS…QLCF). A Glycyl lysine isopeptide (Lys-Gly) (interchain with G-Cter in SUMO2) cross-link involves residue Lys-258. The segment at 422–555 (LFPKKEPDDS…TMKKSFKAKK (134 aa)) is disordered. Positions 430–452 (DSKDEDEDEDEDDSSEEDSEDEE) are enriched in acidic residues. A phosphoserine mark is found at Ser-443, Ser-444, and Ser-448. A compositionally biased stretch (basic residues) spans 491 to 512 (GKTRPLPKKAPPKAKSPAKKAR). A compositionally biased stretch (low complexity) spans 513-532 (PSPSVIKKPSGSSSKKPAAS). Over residues 545–555 (STMKKSFKAKK) the composition is skewed to basic residues.

As to quaternary structure, interacts (via PxVxL motif) with CBX5.

Its subcellular location is the nucleus. It is found in the chromosome. Functionally, component of heterochromatin that maintains heterochromatin integrity during G1/S progression and regulates the duration of G1 phase to critically influence cell proliferative capacity. May play a role in hypoxia-induced oncogenesis. The polypeptide is Heterochromatin protein 1-binding protein 3 (HP1BP3) (Bos taurus (Bovine)).